The sequence spans 178 residues: Protein GrpE (178 aa).

Residues 1-11 (MADELSEKSVE) show a composition bias toward basic and acidic residues. Residues 1–32 (MADELSEKSVEGTEEDGESAPAEGTTEGVPVD) form a disordered region.

It belongs to the GrpE family. As to quaternary structure, homodimer.

It is found in the cytoplasm. Participates actively in the response to hyperosmotic and heat shock by preventing the aggregation of stress-denatured proteins, in association with DnaK and GrpE. It is the nucleotide exchange factor for DnaK and may function as a thermosensor. Unfolded proteins bind initially to DnaJ; upon interaction with the DnaJ-bound protein, DnaK hydrolyzes its bound ATP, resulting in the formation of a stable complex. GrpE releases ADP from DnaK; ATP binding to DnaK triggers the release of the substrate protein, thus completing the reaction cycle. Several rounds of ATP-dependent interactions between DnaJ, DnaK and GrpE are required for fully efficient folding. In Methanothrix thermoacetophila (strain DSM 6194 / JCM 14653 / NBRC 101360 / PT) (Methanosaeta thermophila), this protein is Protein GrpE.